The primary structure comprises 526 residues: 1,4-beta-D-glucan cellobiohydrolase B (526 aa).

The signal sequence occupies residues 1–23; it reads MASSFQLYKALLFFSSLLSAVQA. Residues 24-458 are catalytic; that stretch reads QKVGTQQAEV…SNIKFGPIGS (435 aa). Glutamate 235 acts as the Nucleophile in catalysis. The Proton donor role is filled by glutamate 240. Asparagine 293 and asparagine 400 each carry an N-linked (GlcNAc...) asparagine glycan. The segment at 459–490 is ser/Thr-rich linker; sequence TFGNGGGSGPTTTVTTSTATSTTSSATSTATG. The tract at residues 464–488 is disordered; sequence GGSGPTTTVTTSTATSTTSSATSTA. Over residues 468 to 488 the composition is skewed to low complexity; it reads PTTTVTTSTATSTTSSATSTA. Residues 490–526 enclose the CBM1 domain; it reads GQAQHWEQCGGNGWTGPTVCASPWACTVVNSWYSQCL. 2 disulfides stabilise this stretch: cysteine 498–cysteine 515 and cysteine 509–cysteine 525.

This sequence belongs to the glycosyl hydrolase 7 (cellulase C) family.

The protein localises to the secreted. It catalyses the reaction Hydrolysis of (1-&gt;4)-beta-D-glucosidic linkages in cellulose and cellotetraose, releasing cellobiose from the non-reducing ends of the chains.. In terms of biological role, the biological conversion of cellulose to glucose generally requires three types of hydrolytic enzymes: (1) Endoglucanases which cut internal beta-1,4-glucosidic bonds; (2) Exocellobiohydrolases that cut the disaccharide cellobiose from the non-reducing end of the cellulose polymer chain; (3) Beta-1,4-glucosidases which hydrolyze the cellobiose and other short cello-oligosaccharides to glucose. This is 1,4-beta-D-glucan cellobiohydrolase B (cbhB) from Emericella nidulans (strain FGSC A4 / ATCC 38163 / CBS 112.46 / NRRL 194 / M139) (Aspergillus nidulans).